A 581-amino-acid chain; its full sequence is Aspartate--tRNA ligase (581 aa).

Glu-170 lines the L-aspartate pocket. The interval 194–197 (QLFK) is aspartate. Arg-216 provides a ligand contact to L-aspartate. ATP contacts are provided by residues 216-218 (RDE) and Gln-225. Position 440 (His-440) interacts with L-aspartate. Glu-469 contacts ATP. Residue Arg-476 participates in L-aspartate binding. Residue 521 to 524 (GFDR) coordinates ATP.

It belongs to the class-II aminoacyl-tRNA synthetase family. Type 1 subfamily. In terms of assembly, homodimer.

Its subcellular location is the cytoplasm. The enzyme catalyses tRNA(Asp) + L-aspartate + ATP = L-aspartyl-tRNA(Asp) + AMP + diphosphate. Its function is as follows. Catalyzes the attachment of L-aspartate to tRNA(Asp) in a two-step reaction: L-aspartate is first activated by ATP to form Asp-AMP and then transferred to the acceptor end of tRNA(Asp). The protein is Aspartate--tRNA ligase of Thermosipho africanus (strain TCF52B).